Here is a 356-residue protein sequence, read N- to C-terminus: UDP-N-acetylglucosamine--N-acetylmuramyl-(pentapeptide) pyrophosphoryl-undecaprenol N-acetylglucosamine transferase (356 aa).

Residues 15-17 (TGG), Asn127, Arg163, Ser191, Ile244, 263-268 (ALTVSE), and Gln288 each bind UDP-N-acetyl-alpha-D-glucosamine.

Belongs to the glycosyltransferase 28 family. MurG subfamily.

The protein localises to the cell inner membrane. It catalyses the reaction di-trans,octa-cis-undecaprenyl diphospho-N-acetyl-alpha-D-muramoyl-L-alanyl-D-glutamyl-meso-2,6-diaminopimeloyl-D-alanyl-D-alanine + UDP-N-acetyl-alpha-D-glucosamine = di-trans,octa-cis-undecaprenyl diphospho-[N-acetyl-alpha-D-glucosaminyl-(1-&gt;4)]-N-acetyl-alpha-D-muramoyl-L-alanyl-D-glutamyl-meso-2,6-diaminopimeloyl-D-alanyl-D-alanine + UDP + H(+). It participates in cell wall biogenesis; peptidoglycan biosynthesis. In terms of biological role, cell wall formation. Catalyzes the transfer of a GlcNAc subunit on undecaprenyl-pyrophosphoryl-MurNAc-pentapeptide (lipid intermediate I) to form undecaprenyl-pyrophosphoryl-MurNAc-(pentapeptide)GlcNAc (lipid intermediate II). This Yersinia pseudotuberculosis serotype O:1b (strain IP 31758) protein is UDP-N-acetylglucosamine--N-acetylmuramyl-(pentapeptide) pyrophosphoryl-undecaprenol N-acetylglucosamine transferase.